A 141-amino-acid polypeptide reads, in one-letter code: Large ribosomal subunit protein uL11 (141 aa).

Belongs to the universal ribosomal protein uL11 family. In terms of assembly, part of the ribosomal stalk of the 50S ribosomal subunit. Interacts with L10 and the large rRNA to form the base of the stalk. L10 forms an elongated spine to which L12 dimers bind in a sequential fashion forming a multimeric L10(L12)X complex. Post-translationally, one or more lysine residues are methylated.

Functionally, forms part of the ribosomal stalk which helps the ribosome interact with GTP-bound translation factors. The chain is Large ribosomal subunit protein uL11 from Prochlorococcus marinus (strain MIT 9312).